We begin with the raw amino-acid sequence, 555 residues long: WRKY transcription factor WRKY24 (555 aa).

2 disordered regions span residues 133–183 (TAPA…AGAN) and 197–248 (SEMA…CTFP). A compositionally biased stretch (low complexity) spans 163–183 (QQQQQPWGYQQQPAGMDAGAN). The segment at residues 214 to 278 (SQRRSSDDGY…YKGTHNHAKP (65 aa)) is a DNA-binding region (WRKY 1). The short motif at 253 to 259 (KKKVERS) is the Nuclear localization signal element. Residues 270–365 (KGTHNHAKPQ…DGEGISMAGN (96 aa)) are disordered. 2 stretches are compositionally biased toward polar residues: residues 277–294 (KPQN…QVLQ) and 310–320 (TAATPENSSAS). A compositionally biased stretch (basic and acidic residues) spans 347–356 (DSKRWRKDGD). A DNA-binding region (WRKY 2) is located at residues 379–444 (SDIDILDDGY…YEGKHNHDVP (66 aa)). Residues 466–555 (HPYLPNQPPP…DDMFFQNSLY (90 aa)) are transcription repression of gibberellic acid (GA)-induced promoters. Positions 514–555 (FDDARGSYMSQHQQQQRQNDAMHASRAKEEPGDDMFFQNSLY) are disordered.

It belongs to the WRKY group II-a family. As to expression, expressed in aleurone cells. Mostly expressed in aleurone layers and leaves, and, to a lower extent, in roots, panicles and embryos.

It is found in the nucleus. Its function is as follows. Transcription activator. Interacts specifically with the W box (5'-(T)TGAC[CT]-3'), a frequently occurring elicitor-responsive cis-acting element. Negative regulator of both gibberellic acid (GA) and abscisic acid (ABA) signaling in aleurone cells, probably by interfering with GAM1, via the specific repression of GA- and ABA-induced promoters. In Oryza sativa subsp. japonica (Rice), this protein is WRKY transcription factor WRKY24.